The sequence spans 563 residues: Delta-1-pyrroline-5-carboxylate dehydrogenase, mitochondrial (563 aa).

The N-terminal 24 residues, Met-1–Trp-24, are a transit peptide targeting the mitochondrion. Lys-31 is modified (N6-succinyllysine). A Phosphoserine modification is found at Ser-44. Lys-52 carries the post-translational modification N6-acetyllysine. N6-acetyllysine; alternate occurs at positions 93, 99, 114, 130, and 175. Lys-93, Lys-99, Lys-114, Lys-130, and Lys-175 each carry N6-succinyllysine; alternate. Residues Ser-208, Lys-233, and Gly-286–Thr-290 each bind NAD(+). Glu-314 functions as the Proton acceptor in the catalytic mechanism. At Lys-318 the chain carries N6-acetyllysine. Lys-347 carries the post-translational modification N6-succinyllysine. The Nucleophile role is filled by Cys-348. 2 positions are modified to N6-acetyllysine: Lys-365 and Lys-376. N6-succinyllysine is present on Lys-395. Glu-447 is an NAD(+) binding site. Lys-462 is subject to N6-acetyllysine. Residue Lys-509 is modified to N6-acetyllysine; alternate. Lys-509 is subject to N6-succinyllysine; alternate. Ser-513 provides a ligand contact to substrate. N6-acetyllysine occurs at positions 531 and 552.

It belongs to the aldehyde dehydrogenase family. Homodimer. Highest expression is found in liver followed by skeletal muscle, kidney, heart, brain, placenta, lung and pancreas.

The protein resides in the mitochondrion matrix. The enzyme catalyses L-glutamate 5-semialdehyde + NAD(+) + H2O = L-glutamate + NADH + 2 H(+). It functions in the pathway amino-acid degradation; L-proline degradation into L-glutamate; L-glutamate from L-proline: step 2/2. In terms of biological role, irreversible conversion of delta-1-pyrroline-5-carboxylate (P5C), derived either from proline or ornithine, to glutamate. This is a necessary step in the pathway interconnecting the urea and tricarboxylic acid cycles. The preferred substrate is glutamic gamma-semialdehyde, other substrates include succinic, glutaric and adipic semialdehydes. This Homo sapiens (Human) protein is Delta-1-pyrroline-5-carboxylate dehydrogenase, mitochondrial (ALDH4A1).